The primary structure comprises 513 residues: Zinc finger CCCH-type with G patch domain-containing protein (513 aa).

The C3H1-type zinc finger occupies 155 to 178 (PCSYYLEGECRFDETKCRFSHGAL). Residues 252 to 261 (DQEEDDELSS) show a composition bias toward acidic residues. The interval 252–282 (DQEEDDELSSEESNSSMNNESSDEAESDMDD) is disordered. Over residues 262-271 (EESNSSMNNE) the composition is skewed to low complexity. Residues 272-282 (SSDEAESDMDD) are compositionally biased toward acidic residues. Residues 312–358 (TRGIGSKLMEKMGYIHGTGLGSDGRGIVTPVSAQILPQGRSLDACME) form the G-patch domain. The span at 478–495 (VQMQSHKQELATLQAQER) shows a compositional bias: polar residues. The tract at residues 478–513 (VQMQSHKQELATLQAQERSLSKEQQTRKSKNKMFEF) is disordered. The segment covering 496-513 (SLSKEQQTRKSKNKMFEF) has biased composition (basic and acidic residues).

It is found in the nucleus. Functionally, transcription repressor. In Drosophila erecta (Fruit fly), this protein is Zinc finger CCCH-type with G patch domain-containing protein.